We begin with the raw amino-acid sequence, 302 residues long: Sulfate adenylyltransferase subunit 2 (302 aa).

This sequence belongs to the PAPS reductase family. CysD subfamily. As to quaternary structure, heterodimer composed of CysD, the smaller subunit, and CysN.

The catalysed reaction is sulfate + ATP + H(+) = adenosine 5'-phosphosulfate + diphosphate. It participates in sulfur metabolism; hydrogen sulfide biosynthesis; sulfite from sulfate: step 1/3. Functionally, with CysN forms the ATP sulfurylase (ATPS) that catalyzes the adenylation of sulfate producing adenosine 5'-phosphosulfate (APS) and diphosphate, the first enzymatic step in sulfur assimilation pathway. APS synthesis involves the formation of a high-energy phosphoric-sulfuric acid anhydride bond driven by GTP hydrolysis by CysN coupled to ATP hydrolysis by CysD. The protein is Sulfate adenylyltransferase subunit 2 of Xanthomonas oryzae pv. oryzae (strain MAFF 311018).